A 147-amino-acid chain; its full sequence is MCGCVHSTQDQALRLEGEPNPPAAPTSTLAPKNMPKSISISKQLASIKALRKGSDLEKAIATAALVFRNSSDPDGKLRKATAKNLLQTQFKNFAEGQETKARYKDLLSELDEHTENKLDFEDFMVLLLSVTIMSDLLQNIWSVKITQ.

Residues 14-34 (RLEGEPNPPAAPTSTLAPKNM) are disordered. Residues 25–34 (PTSTLAPKNM) show a composition bias toward polar residues.

This sequence belongs to the S-100 family.

It is found in the cell projection. Its subcellular location is the cilium. Functionally, may be a component of the linker structure that bridges the ciliary membrane and peripheral singlet microtubules. The chain is Sentan (SNTN) from Bos taurus (Bovine).